Consider the following 123-residue polypeptide: Glucose starvation-inducible protein B (123 aa).

Basic and acidic residues-rich tracts occupy residues 1–29 and 41–109; these read MADN…KEFY and SKNH…KEFY. Residues 1–123 form a disordered region; it reads MADNNKMSRE…SKGGNARNND (123 aa). Repeat copies occupy residues 13–32, 33–52, 53–72, 73–92, and 93–112. A 5 X 20 AA approximate tandem repeats region spans residues 13-120; that stretch reads GRKGGETTSK…EIGSKGGNAR (108 aa).

Functionally, involved in an adaptive response to nutrient deprivation other than sporulation. This is Glucose starvation-inducible protein B (gsiB) from Bacillus subtilis (strain 168).